The following is a 77-amino-acid chain: Defensin-like protein 159 (77 aa).

Residues 1–27 form the signal peptide; the sequence is MAKLSCSYFLVLILVFSAFLMVERAEG. 4 disulfide bridges follow: Cys30/Cys77, Cys40/Cys59, Cys45/Cys71, and Cys49/Cys73.

It belongs to the DEFL family.

Its subcellular location is the secreted. The chain is Defensin-like protein 159 (LCR25) from Arabidopsis thaliana (Mouse-ear cress).